The primary structure comprises 360 residues: UDP-3-O-acylglucosamine N-acyltransferase (360 aa).

H253 acts as the Proton acceptor in catalysis.

The protein belongs to the transferase hexapeptide repeat family. LpxD subfamily. In terms of assembly, homotrimer.

It catalyses the reaction a UDP-3-O-[(3R)-3-hydroxyacyl]-alpha-D-glucosamine + a (3R)-hydroxyacyl-[ACP] = a UDP-2-N,3-O-bis[(3R)-3-hydroxyacyl]-alpha-D-glucosamine + holo-[ACP] + H(+). The protein operates within bacterial outer membrane biogenesis; LPS lipid A biosynthesis. Functionally, catalyzes the N-acylation of UDP-3-O-acylglucosamine using 3-hydroxyacyl-ACP as the acyl donor. Is involved in the biosynthesis of lipid A, a phosphorylated glycolipid that anchors the lipopolysaccharide to the outer membrane of the cell. This chain is UDP-3-O-acylglucosamine N-acyltransferase, found in Burkholderia multivorans (strain ATCC 17616 / 249).